We begin with the raw amino-acid sequence, 246 residues long: Transmembrane and ubiquitin-like domain-containing protein 1 (246 aa).

The required to release iHOPS from membranes stretch occupies residues 2–30 (ALIEGVGDEVTILFSALACLLVLALAWVS). Residues 11 to 31 (VTILFSALACLLVLALAWVST) traverse the membrane as a helical segment. The tract at residues 35–102 (EGADPLPQPS…PPPPDSPQEP (68 aa)) is disordered. Pro residues predominate over residues 40 to 50 (LPQPSGTPTPT). Residues T71 and T92 each carry the phosphothreonine modification. Phosphoserine is present on residues S98 and S127. The Ubiquitin-like domain maps to 103–176 (LVLRLKFLND…LHCHVSTRVG (74 aa)). Helical transmembrane passes span 195–215 (VGSL…YCQI) and 221–241 (FPLT…LLAF).

As to quaternary structure, interacts with EEF1A1, GRIA2, GRIP1, CAMLG, TUBG1. Interacts with NPM1 and CDKN2A; TMUB1 can enhance interaction between NPM1 and CDKN2A and is proposed to bridge the proteins; proposed to be mediated by iHOPS. Interacts with ERLIN2 and AMFR; TMUB1 promotes the interaction of ERLIN2 with AMFR. Post-translationally, processed by regulated intramembrane proteolysis (RIP) in the N-terminus to release iHOPS from membranes.

Its subcellular location is the membrane. It is found in the postsynaptic cell membrane. The protein resides in the recycling endosome. The protein localises to the cytoplasm. It localises to the nucleus. Its subcellular location is the nucleolus. It is found in the cytoskeleton. The protein resides in the microtubule organizing center. The protein localises to the centrosome. Its function is as follows. Involved in sterol-regulated ubiquitination and degradation of HMG-CoA reductase HMGCR. Involved in positive regulation of AMPA-selective glutamate receptor GRIA2 recycling to the cell surface. Acts as negative regulator of hepatocyte growth during regeneration. Functionally, may contribute to the regulation of translation during cell-cycle progression. May contribute to the regulation of cell proliferation. May be involved in centrosome assembly. Modulates stabilization and nucleolar localization of tumor suppressor CDKN2A and enhances association between CDKN2A and NPM1. The protein is Transmembrane and ubiquitin-like domain-containing protein 1 (TMUB1) of Bos taurus (Bovine).